Consider the following 328-residue polypeptide: uncharacterized protein (328 aa).

The region spanning Arg-3 to Gly-126 is the Bro-N domain.

This is an uncharacterized protein from Autographa californica nuclear polyhedrosis virus (AcMNPV).